We begin with the raw amino-acid sequence, 132 residues long: Fatty acid-binding protein (132 aa).

(5Z,8Z,11Z,14Z)-eicosatetraenoate is bound by residues Arg-107 and 127 to 129; that span reads RNY. (9Z)-octadecenoate-binding positions include Arg-107 and 127 to 129; that span reads RNY.

It belongs to the calycin superfamily. Fatty-acid binding protein (FABP) family.

It is found in the cytoplasm. Functionally, may play a role in the transport of fatty acids. Binds to various fatty acids but not retinoids. The protein is Fatty acid-binding protein of Schistosoma japonicum (Blood fluke).